Reading from the N-terminus, the 445-residue chain is tRNA-2-methylthio-N(6)-dimethylallyladenosine synthase (445 aa).

Residues 2 to 119 (KKLYIRTFGC…LPQLIAERRH (118 aa)) enclose the MTTase N-terminal domain. [4Fe-4S] cluster-binding residues include Cys-11, Cys-48, Cys-82, Cys-156, Cys-160, and Cys-163. The Radical SAM core domain occupies 142–378 (RVEGASAFVS…RIDQQAQAIS (237 aa)). In terms of domain architecture, TRAM spans 379–442 (QAMVGRVERA…PHSLRGEIVT (64 aa)).

This sequence belongs to the methylthiotransferase family. MiaB subfamily. As to quaternary structure, monomer. [4Fe-4S] cluster serves as cofactor.

It is found in the cytoplasm. The catalysed reaction is N(6)-dimethylallyladenosine(37) in tRNA + (sulfur carrier)-SH + AH2 + 2 S-adenosyl-L-methionine = 2-methylsulfanyl-N(6)-dimethylallyladenosine(37) in tRNA + (sulfur carrier)-H + 5'-deoxyadenosine + L-methionine + A + S-adenosyl-L-homocysteine + 2 H(+). Its function is as follows. Catalyzes the methylthiolation of N6-(dimethylallyl)adenosine (i(6)A), leading to the formation of 2-methylthio-N6-(dimethylallyl)adenosine (ms(2)i(6)A) at position 37 in tRNAs that read codons beginning with uridine. The chain is tRNA-2-methylthio-N(6)-dimethylallyladenosine synthase from Aromatoleum aromaticum (strain DSM 19018 / LMG 30748 / EbN1) (Azoarcus sp. (strain EbN1)).